A 478-amino-acid chain; its full sequence is Trigger factor (478 aa).

The segment at 1-41 is disordered; it reads MAELADAPDLGSGARKGVRVRLPPPAPHKNGGKNESRGSGQ. The PPIase FKBP-type domain occupies 197–279; the sequence is GDMLVVEYEV…IKEIKKKVLP (83 aa). Over residues 455–472 the composition is skewed to basic and acidic residues; sequence VEQKQEEEKKEEKEEVKN. Residues 455 to 478 are disordered; it reads VEQKQEEEKKEEKEEVKNESQGNT.

It belongs to the FKBP-type PPIase family. Tig subfamily.

It localises to the cytoplasm. It carries out the reaction [protein]-peptidylproline (omega=180) = [protein]-peptidylproline (omega=0). Involved in protein export. Acts as a chaperone by maintaining the newly synthesized protein in an open conformation. Functions as a peptidyl-prolyl cis-trans isomerase. This is Trigger factor from Aquifex aeolicus (strain VF5).